The primary structure comprises 105 residues: Nitrogenase-stabilizing/protective protein NifW (105 aa).

Belongs to the NifW family. In terms of assembly, homotrimer; associates with NifD.

Its function is as follows. May protect the nitrogenase Fe-Mo protein from oxidative damage. The protein is Nitrogenase-stabilizing/protective protein NifW of Nostoc punctiforme (strain ATCC 29133 / PCC 73102).